Reading from the N-terminus, the 252-residue chain is MNKFEDIRGVAFDLDGTLVDSAPGLAAAVDMALYALELPVAGEERVITWIGNGADVLMERALTWARQERATLRKTMGKPPVDDDIPAEEQVRILRKLFDRYYGEVAEEGTFLFPHVADTLGALQAKGLPLGLVTNKPTPFVAPLLEALDIAKYFSVVIGGDDVQNKKPHPDPLLLVAERMGIAPQQMLFVGDSRNDIQAAKAAGCPSVGLTYGYNYGEAIDLSQPDVIYQSINDLLPALGLPHSENQESKND.

The Nucleophile role is filled by Asp13. Mg(2+) contacts are provided by Asp13, Asp15, and Asp192.

The protein belongs to the HAD-like hydrolase superfamily. CbbY/CbbZ/Gph/YieH family. Monomer. Mg(2+) is required as a cofactor. It depends on chloride as a cofactor.

The catalysed reaction is 2-phosphoglycolate + H2O = glycolate + phosphate. Its pathway is organic acid metabolism; glycolate biosynthesis; glycolate from 2-phosphoglycolate: step 1/1. Functionally, specifically catalyzes the dephosphorylation of 2-phosphoglycolate. Is involved in the dissimilation of the intracellular 2-phosphoglycolate formed during the DNA repair of 3'-phosphoglycolate ends, a major class of DNA lesions induced by oxidative stress. The polypeptide is Phosphoglycolate phosphatase (Shigella flexneri).